Reading from the N-terminus, the 646-residue chain is Lipoteichoic acid synthase (646 aa).

Over 1–7 (MSLPKKK) the chain is Cytoplasmic. The helical transmembrane segment at 8-28 (IGIFAFFLLTVFTITLKTYFS) threads the bilayer. The Extracellular portion of the chain corresponds to 29-43 (YYVDFSLGVKGLVQN). Residues 44–64 (LILIMNPYSLIALVLSVFLFF) traverse the membrane as a helical segment. Topologically, residues 65-68 (KGKK) are cytoplasmic. The chain crosses the membrane as a helical span at residues 69–89 (AFWFIFIGGFLLTFLLYANVV). At 90–119 (YFRFFSDFLTFSTLNQAGNVESMGGAVSAS) the chain is on the extracellular side. The chain crosses the membrane as a helical span at residues 120–140 (FKWYDFVYFIDTIIYLAILIF). At 141–153 (KRKWLDNRAFSKK) the chain is on the cytoplasmic side. Residues 154–174 (FVPVVMATSVALFFLNLAFAE) traverse the membrane as a helical segment. The Extracellular portion of the chain corresponds to 175 to 646 (TDRPELLTRT…KSGPKGNEKK (472 aa)). The Mn(2+) site is built by E255 and T300. The active site involves T300. Residue H416 participates in substrate binding. Positions 475 and 476 each coordinate Mn(2+).

It belongs to the LTA synthase family. Proteolytically cleaved.

Its subcellular location is the cell membrane. The protein localises to the secreted. The protein operates within cell wall biogenesis; lipoteichoic acid biosynthesis. Functionally, catalyzes the polymerization of lipoteichoic acid (LTA) polyglycerol phosphate, a reaction that presumably uses phosphatidylglycerol (PG) as substrate. Is required for staphylococcal growth and cell division process. The chain is Lipoteichoic acid synthase (ltaS) from Staphylococcus epidermidis (strain ATCC 12228 / FDA PCI 1200).